Reading from the N-terminus, the 396-residue chain is Putative transposase y4rJ (396 aa).

It belongs to the transposase 20 family.

The protein is Putative transposase y4rJ of Sinorhizobium fredii (strain NBRC 101917 / NGR234).